Consider the following 735-residue polypeptide: Peroxisomal multifunctional enzyme type 2 (735 aa).

A (3R)-hydroxyacyl-CoA dehydrogenase region spans residues 1 to 305 (MASPLRFDGR…IEVLHKIDSE (305 aa)). NAD(+) is bound by residues 16-40 (GAGG…VVND), L21, and D40. An N6-acetyllysine; alternate modification is found at K46. At K46 the chain carries N6-succinyllysine; alternate. S52 is subject to Phosphoserine. An N6-succinyllysine mark is found at K57 and K68. NAD(+) is bound at residue 75-76 (SV). K84 carries the N6-succinyllysine modification. N99 contacts NAD(+). S151 serves as a coordination point for substrate. Y164 (proton acceptor) is an active-site residue. NAD(+) is bound by residues 164–168 (YSAAK) and 196–199 (AGSR). Phosphothreonine is present on T265. K275 is subject to N6-succinyllysine. Residues S304 and S308 each carry the phosphoserine modification. An enoyl-CoA hydratase 2 region spans residues 321–621 (SGFAGVVGHK…AQTPSEGGAL (301 aa)). Position 355 is an N6-succinyllysine (K355). 405 to 406 (HG) serves as a coordination point for (3R)-3-hydroxydecanoyl-CoA. An N6-succinyllysine modification is found at K423. Residues K434, 509–514 (DSNPLH), G532, and F562 each bind (3R)-3-hydroxydecanoyl-CoA. The MaoC-like domain maps to 483–599 (VPSRPPDAVL…QETGDIVISN (117 aa)). K564 carries the post-translational modification N6-acetyllysine. Residues K578 and K662 each carry the N6-succinyllysine modification. One can recognise an SCP2 domain in the interval 623-735 (SALVFGEIGR…QMILKDYAKL (113 aa)). K668 carries the post-translational modification N6-acetyllysine. Q705 and Q723 together coordinate substrate. K724 carries the N6-succinyllysine modification. The short motif at 733-735 (AKL) is the Microbody targeting signal element.

This sequence belongs to the short-chain dehydrogenases/reductases (SDR) family. In terms of assembly, homodimer.

The protein resides in the peroxisome. The enzyme catalyses a (3R)-3-hydroxyacyl-CoA + NAD(+) = a 3-oxoacyl-CoA + NADH + H(+). The catalysed reaction is (24R,25R)-3alpha,7alpha,12alpha,24-tetrahydroxy-5beta-cholestan-26-oyl-CoA = (24E)-3alpha,7alpha,12alpha-trihydroxy-5beta-cholest-24-en-26-oyl-CoA + H2O. It carries out the reaction a (3R)-3-hydroxyacyl-CoA = a (2E)-enoyl-CoA + H2O. It catalyses the reaction (2E)-octenoyl-CoA + H2O = (3R)-hydroxyoctanoyl-CoA. The enzyme catalyses (3R)-hydroxyoctanoyl-CoA + NAD(+) = 3-oxooctanoyl-CoA + NADH + H(+). The catalysed reaction is (3R)-hydroxyhexadecanoyl-CoA + NAD(+) = 3-oxohexadecanoyl-CoA + NADH + H(+). It carries out the reaction (2E)-hexadecenedioyl-CoA + H2O = (3R)-hydroxyhexadecanedioyl-CoA. It catalyses the reaction (3R)-hydroxyhexadecanedioyl-CoA + NAD(+) = 3-oxohexadecanedioyl-CoA + NADH + H(+). The enzyme catalyses (3R)-hydroxyhexadecanoyl-CoA = (2E)-hexadecenoyl-CoA + H2O. The catalysed reaction is (3R)-3-hydroxydecanoyl-CoA = (2E)-decenoyl-CoA + H2O. It carries out the reaction (3R)-3-hydroxydecanoyl-CoA + NAD(+) = 3-oxodecanoyl-CoA + NADH + H(+). It catalyses the reaction (24R,25R)-3alpha,7alpha,12alpha,24-tetrahydroxy-5beta-cholestan-26-oyl-CoA + NAD(+) = 3alpha,7alpha,12alpha-trihydroxy-24-oxo-5beta-cholestan-26-oyl-CoA + NADH + H(+). The protein operates within lipid metabolism; fatty acid beta-oxidation. Functionally, bifunctional enzyme acting on the peroxisomal fatty acid beta-oxidation pathway. Catalyzes two of the four reactions in fatty acid degradation: hydration of 2-enoyl-CoA (trans-2-enoyl-CoA) to produce (3R)-3-hydroxyacyl-CoA, and dehydrogenation of (3R)-3-hydroxyacyl-CoA to produce 3-ketoacyl-CoA (3-oxoacyl-CoA), which is further metabolized by SCPx. Can use straight-chain and branched-chain fatty acids, as well as bile acid intermediates as substrates. The protein is Peroxisomal multifunctional enzyme type 2 of Rattus norvegicus (Rat).